Consider the following 112-residue polypeptide: UPF0342 protein SPT_0901 (112 aa).

Belongs to the UPF0342 family.

This chain is UPF0342 protein SPT_0901, found in Streptococcus pneumoniae (strain Taiwan19F-14).